A 356-amino-acid chain; its full sequence is Probable butyrate kinase (356 aa).

This sequence belongs to the acetokinase family.

It is found in the cytoplasm. The enzyme catalyses butanoate + ATP = butanoyl phosphate + ADP. In Clostridium perfringens (strain SM101 / Type A), this protein is Probable butyrate kinase.